The chain runs to 827 residues: Leucine--tRNA ligase (827 aa).

Positions proline 42–histidine 52 match the 'HIGH' region motif. A 'KMSKS' region motif is present at residues lysine 581 to serine 585. Position 584 (lysine 584) interacts with ATP.

The protein belongs to the class-I aminoacyl-tRNA synthetase family.

Its subcellular location is the cytoplasm. It carries out the reaction tRNA(Leu) + L-leucine + ATP = L-leucyl-tRNA(Leu) + AMP + diphosphate. The protein is Leucine--tRNA ligase of Desulforamulus reducens (strain ATCC BAA-1160 / DSM 100696 / MI-1) (Desulfotomaculum reducens).